We begin with the raw amino-acid sequence, 99 residues long: Imizoquin biosynthesis cluster protein A (99 aa).

Its pathway is secondary metabolite biosynthesis. Its function is as follows. Part of the gene cluster that mediates the biosynthesis of imizoquins A to D, tripeptide-derived alkaloids that serve a protective role against oxidative stress that are essential for normal germination. ImqB is a canonical three-module NRPS that assembles the tripeptide backbone of the imizoquins via condensation of Trp, Tyr, and Leu-derived precursors. N-methylation by imqF and phenol oxidation by imqC, followed by cyclization via the FAD-dependent oxidase imqH carry out the three-step transformation of L-tyrosine into tetrahydroisoquinoline. Importantly, this sequence requires the presence of a free amine in the tyrosine moiety, indicating that isoquinoline formation occurs prior to peptide bond formation. The imidazolidin-4-one ring of imizoquins could form following additional oxidation of the methyl-derived bridgehead carbon by imqH. Lastly, O-methylation by imqG and leucine hydroxylation by imqE complete biosynthesis of the imizoquins. In Aspergillus flavus (strain ATCC 200026 / FGSC A1120 / IAM 13836 / NRRL 3357 / JCM 12722 / SRRC 167), this protein is Imizoquin biosynthesis cluster protein A.